A 260-amino-acid polypeptide reads, in one-letter code: Magnesium dechelatase SGRL, chloroplastic (260 aa).

The N-terminal 45 residues, methionine 1–arginine 45, are a transit peptide targeting the chloroplast.

This sequence belongs to the staygreen family. Interacts with the light harvesting complex II (LHCII). Interacts with the chlorophyll catabolic enzymes (CCEs) NYC1, NOL, PAO and RCCR. In terms of tissue distribution, expressed in cotyledons, pollen and young leaves.

It localises to the plastid. Its subcellular location is the chloroplast thylakoid. The enzyme catalyses chlorophyllide a + 2 H(+) = pheophorbide a + Mg(2+). Its function is as follows. Magnesium chelatase involved in chlorophyll a degradation in the chlorophyll-protein complexes of photosystem I (PSI) and photosystem II (PSII). Contributes to the degradation of PSI and PSII in the thylakoid membranes. Recombinant SGRL possesses high dechelating activity against chlorophyllide a, very low activity against chlorophyll a, and no activity against chlorophyll b. Contributes to abiotic stress-induced chlorophyll degradation and leaf yellowing during vegetative plant growth. This is Magnesium dechelatase SGRL, chloroplastic from Arabidopsis thaliana (Mouse-ear cress).